The primary structure comprises 212 residues: MSAETGEKVVELLIPLEMYLQHGVHIGTKMVTNYMKRFVYKRRNIDGLAILDVRKIDQRIRVAAKFLSRFEPEKIMVVSVRQYGHKPVTMFAQFTGAKPVIGRFVPGTLTNPALEVYYEPDVILVTDTRMDQQAIVEAAEIGIPVVAICDTDNKTENVDLIIPGNNKGRKSLALLYWLLTRQVLVERGQLSPDAPEDQPAPVSEFETKVKMV.

A disordered region spans residues 190 to 212 (LSPDAPEDQPAPVSEFETKVKMV).

The protein belongs to the universal ribosomal protein uS2 family.

The sequence is that of Small ribosomal subunit protein uS2 from Ignicoccus hospitalis (strain KIN4/I / DSM 18386 / JCM 14125).